A 395-amino-acid polypeptide reads, in one-letter code: 8-amino-7-oxononanoate synthase (395 aa).

Arg24 is a binding site for substrate. 111–112 (GF) serves as a coordination point for pyridoxal 5'-phosphate. His136 contributes to the substrate binding site. Pyridoxal 5'-phosphate-binding positions include Ser184, 209 to 212 (DDAH), and 240 to 243 (TLSK). Position 243 is an N6-(pyridoxal phosphate)lysine (Lys243). A substrate-binding site is contributed by Thr357.

Belongs to the class-II pyridoxal-phosphate-dependent aminotransferase family. BioF subfamily. In terms of assembly, homodimer. The cofactor is pyridoxal 5'-phosphate.

The enzyme catalyses 6-carboxyhexanoyl-[ACP] + L-alanine + H(+) = (8S)-8-amino-7-oxononanoate + holo-[ACP] + CO2. The protein operates within cofactor biosynthesis; biotin biosynthesis. Functionally, catalyzes the decarboxylative condensation of pimeloyl-[acyl-carrier protein] and L-alanine to produce 8-amino-7-oxononanoate (AON), [acyl-carrier protein], and carbon dioxide. The protein is 8-amino-7-oxononanoate synthase of Alkaliphilus oremlandii (strain OhILAs) (Clostridium oremlandii (strain OhILAs)).